Here is a 288-residue protein sequence, read N- to C-terminus: Oxaloacetate decarboxylase (288 aa).

S47 contributes to the substrate binding site. D85 contributes to the Mg(2+) binding site. Substrate is bound by residues R156 and H232.

The protein belongs to the isocitrate lyase/PEP mutase superfamily. Oxaloacetate decarboxylase family. Homotetramer; dimer of dimers. The cofactor is Mg(2+).

It carries out the reaction oxaloacetate + H(+) = pyruvate + CO2. In terms of biological role, catalyzes the decarboxylation of oxaloacetate into pyruvate. Seems to play a role in maintaining cellular concentrations of bicarbonate and pyruvate. The sequence is that of Oxaloacetate decarboxylase from Rhodopseudomonas palustris (strain ATCC BAA-98 / CGA009).